A 651-amino-acid chain; its full sequence is Macrolide export ATP-binding/permease protein MacB (651 aa).

Positions 2–239 constitute an ABC transporter domain; the sequence is IEIVNVTKTY…PQMPQGGMEA (238 aa). An ATP-binding site is contributed by 38-45; the sequence is GASGSGKS. The next 4 membrane-spanning stretches (helical) occupy residues 269 to 289, 532 to 552, 589 to 609, and 614 to 634; these read FLSVLGILVGVASVIAMMALG, IAAISLVVGGIGIMNIMLVSV, IIGIVVGVGVSVMLSAFAGWA, and MFSVVLATGFSVLIGLFFGLW.

It belongs to the ABC transporter superfamily. Macrolide exporter (TC 3.A.1.122) family. As to quaternary structure, homodimer.

It is found in the cell inner membrane. Its function is as follows. Non-canonical ABC transporter that contains transmembrane domains (TMD), which form a pore in the inner membrane, and an ATP-binding domain (NBD), which is responsible for energy generation. Confers resistance against macrolides. This Chlorobaculum tepidum (strain ATCC 49652 / DSM 12025 / NBRC 103806 / TLS) (Chlorobium tepidum) protein is Macrolide export ATP-binding/permease protein MacB.